A 588-amino-acid chain; its full sequence is Protein cereblon (588 aa).

Disordered stretches follow at residues 1-107 (MDDE…DDSD) and 159-197 (QERR…DIGF). Positions 41–50 (AWNNATQDEQ) are enriched in polar residues. Over residues 75-85 (MVEDVLQDDTA) the composition is skewed to acidic residues. The segment covering 86 to 96 (SEGSHPSSDMS) has biased composition (polar residues). The span at 159–168 (QERRRSRTSE) shows a compositional bias: basic and acidic residues. Positions 181 to 192 (NDPPPQQPPRPP) are enriched in pro residues. Positions 228–454 (HMLIFLHQHI…LIKSTFKDES (227 aa)) constitute a Lon N-terminal domain. Positions 453-562 (ESLFFCRYCN…LAGSSVRIGK (110 aa)) constitute a CULT domain. Positions 458, 461, 527, and 530 each coordinate Zn(2+).

This sequence belongs to the CRBN family. Likely a component of a DCX (DDB1-CUL4-X-box) protein ligase complex. May interact with pic/DDB1. Post-translationally, ubiquitinated.

The protein resides in the nucleus. It participates in protein modification; protein ubiquitination. In terms of biological role, substrate recognition component of a DCX (DDB1-CUL4-X-box) E3 protein ligase complex that mediates the ubiquitination and subsequent proteasomal degradation of target proteins. Has an essential role in mediating growth by negatively regulating insulin signaling. It also has a role in maintaining presynaptic function in the neuromuscular junction synapses of third-instar larvae. The polypeptide is Protein cereblon (Drosophila yakuba (Fruit fly)).